The chain runs to 259 residues: Sphinganine C4-monooxygenase 2 (259 aa).

A run of 3 helical transmembrane segments spans residues 10–30 (FLGTFVPILVYWVYSGMYICL), 54–74 (AVVKGVLLQQTLQAIISVILF), and 91–111 (ILLLARQFIIAMLVIDTWQYF). Residues 98–234 (FIIAMLVIDT…FVMWDRILGT (137 aa)) enclose the Fatty acid hydroxylase domain. The Histidine box-1 signature appears at 113–117 (HRYMH). The short motif at 127–131 (HSQHH) is the Histidine box-2 element. The short motif at 206 to 212 (YHDVHHQ) is the Histidine box-3 element.

Belongs to the sterol desaturase family. Fe cation serves as cofactor. Ubiquitous, with higher levels in flowers and roots.

The protein resides in the endoplasmic reticulum membrane. The enzyme catalyses a dihydroceramide + 2 Fe(II)-[cytochrome b5] + O2 + 2 H(+) = a phytoceramide + 2 Fe(III)-[cytochrome b5] + H2O. The protein operates within membrane lipid metabolism; sphingolipid biosynthesis. Involved in sphingolipid trihydroxy long-chain base (4-hydroxysphinganine) biosynthesis. Can use C18- and C20-sphinganine as substrates to produce C18- and C20-phytosphinganines (D-ribo-2-amino-1,3,4-trihydroxyoctadecane and -eicosane). The chain is Sphinganine C4-monooxygenase 2 (SBH2) from Arabidopsis thaliana (Mouse-ear cress).